A 188-amino-acid chain; its full sequence is Phosphoribosylglycinamide formyltransferase (188 aa).

12 to 14 (GSN) serves as a coordination point for N(1)-(5-phospho-beta-D-ribosyl)glycinamide. Residues lysine 66, 91–94 (MRLV), and asparagine 108 contribute to the (6R)-10-formyltetrahydrofolate site. Residue histidine 110 is the Proton donor of the active site.

It belongs to the GART family.

It carries out the reaction N(1)-(5-phospho-beta-D-ribosyl)glycinamide + (6R)-10-formyltetrahydrofolate = N(2)-formyl-N(1)-(5-phospho-beta-D-ribosyl)glycinamide + (6S)-5,6,7,8-tetrahydrofolate + H(+). It participates in purine metabolism; IMP biosynthesis via de novo pathway; N(2)-formyl-N(1)-(5-phospho-D-ribosyl)glycinamide from N(1)-(5-phospho-D-ribosyl)glycinamide (10-formyl THF route): step 1/1. Its function is as follows. Catalyzes the transfer of a formyl group from 10-formyltetrahydrofolate to 5-phospho-ribosyl-glycinamide (GAR), producing 5-phospho-ribosyl-N-formylglycinamide (FGAR) and tetrahydrofolate. This Staphylococcus epidermidis (strain ATCC 35984 / DSM 28319 / BCRC 17069 / CCUG 31568 / BM 3577 / RP62A) protein is Phosphoribosylglycinamide formyltransferase.